The sequence spans 154 residues: 6,7-dimethyl-8-ribityllumazine synthase (154 aa).

5-amino-6-(D-ribitylamino)uracil-binding positions include F22, 56–58 (SFE), and 81–83 (VLI). 86 to 87 (ET) provides a ligand contact to (2S)-2-hydroxy-3-oxobutyl phosphate. Residue H89 is the Proton donor of the active site. F114 contacts 5-amino-6-(D-ribitylamino)uracil. Residue R128 participates in (2S)-2-hydroxy-3-oxobutyl phosphate binding.

It belongs to the DMRL synthase family.

It catalyses the reaction (2S)-2-hydroxy-3-oxobutyl phosphate + 5-amino-6-(D-ribitylamino)uracil = 6,7-dimethyl-8-(1-D-ribityl)lumazine + phosphate + 2 H2O + H(+). It functions in the pathway cofactor biosynthesis; riboflavin biosynthesis; riboflavin from 2-hydroxy-3-oxobutyl phosphate and 5-amino-6-(D-ribitylamino)uracil: step 1/2. Catalyzes the formation of 6,7-dimethyl-8-ribityllumazine by condensation of 5-amino-6-(D-ribitylamino)uracil with 3,4-dihydroxy-2-butanone 4-phosphate. This is the penultimate step in the biosynthesis of riboflavin. The chain is 6,7-dimethyl-8-ribityllumazine synthase from Chlamydia felis (strain Fe/C-56) (Chlamydophila felis).